A 692-amino-acid polypeptide reads, in one-letter code: Elongation factor G (692 aa).

Residues 8 to 283 enclose the tr-type G domain; sequence EDYRNFGIMA…AVVDYLPSPV (276 aa). GTP contacts are provided by residues 17–24, 81–85, and 135–138; these read AHIDAGKT, DTPGH, and NKMD.

The protein belongs to the TRAFAC class translation factor GTPase superfamily. Classic translation factor GTPase family. EF-G/EF-2 subfamily.

The protein resides in the cytoplasm. In terms of biological role, catalyzes the GTP-dependent ribosomal translocation step during translation elongation. During this step, the ribosome changes from the pre-translocational (PRE) to the post-translocational (POST) state as the newly formed A-site-bound peptidyl-tRNA and P-site-bound deacylated tRNA move to the P and E sites, respectively. Catalyzes the coordinated movement of the two tRNA molecules, the mRNA and conformational changes in the ribosome. The polypeptide is Elongation factor G (Caulobacter vibrioides (strain ATCC 19089 / CIP 103742 / CB 15) (Caulobacter crescentus)).